Reading from the N-terminus, the 338-residue chain is Heat-inducible transcription repressor HrcA (338 aa).

It belongs to the HrcA family.

Negative regulator of class I heat shock genes (grpE-dnaK-dnaJ and groELS operons). Prevents heat-shock induction of these operons. This is Heat-inducible transcription repressor HrcA from Bacillus mycoides (strain KBAB4) (Bacillus weihenstephanensis).